Here is a 352-residue protein sequence, read N- to C-terminus: MVFRIASSPYTHNQRQTSRIMLLVLLAAVPGIAAQLWFFGWGTLVQILLASVSALLAEALVLKLRKQSVAATLKDNSALLTGLLLAVSIPPLAPWWMVVLGTVFAVIIAKQLYGGLGQNPFNPAMIGYVVLLISFPVQMTSWLPPHEIAVNIPGFIDAIQVIFSGHTASGGDMNTLRLGIDGISQATPLDTFKTSVRAGHSVEQIMQYPIYSGILAGAGWQWVNLAWLAGGVWLLWQKAIRWHIPLSFLVTLTLCATLGWLFSPETLAAPQIHLLSGATMLGAFFILTDPVTASTTNRGRLIFGALAGLLVWLIRSFGGYPDGVAFAVLLANITVPLIDYYTRPRVYGHRKG.

A run of 5 helical transmembrane segments spans residues 20 to 40 (IMLL…WFFG), 42 to 62 (GTLV…ALVL), 78 to 109 (ALLT…VIIA), 123 to 143 (PAMI…TSWL), and 148 to 168 (IAVN…GHTA). Threonine 187 carries the FMN phosphoryl threonine modification. Helical transmembrane passes span 214–234 (ILAG…GVWL), 242–262 (WHIP…GWLF), 267–287 (LAAP…FFIL), 301–321 (LIFG…GGYP), and 322–342 (DGVA…DYYT).

Belongs to the NqrB/RnfD family. As to quaternary structure, the complex is composed of six subunits: RsxA, RsxB, RsxC, RsxD, RsxE and RsxG. Requires FMN as cofactor.

The protein localises to the cell inner membrane. Its function is as follows. Part of a membrane-bound complex that couples electron transfer with translocation of ions across the membrane. Required to maintain the reduced state of SoxR. The polypeptide is Ion-translocating oxidoreductase complex subunit D (Escherichia coli O139:H28 (strain E24377A / ETEC)).